Consider the following 153-residue polypeptide: Putative nuclear shuttle protein (153 aa).

Belongs to the nanoviridae nuclear shuttle protein family.

The protein resides in the host nucleus. The protein localises to the host cytoplasm. Functionally, putative nuclear shuttle protein. The chain is Putative nuclear shuttle protein (DNA-N) from Faba bean necrotic yellows virus (isolate Syrian SV292-88) (FBNYV).